Consider the following 164-residue polypeptide: uncharacterized protein (164 aa).

The RDD domain maps to 26–158 (YAGFWVRFWA…DYIADTTVVH (133 aa)). The next 2 membrane-spanning stretches (helical) occupy residues 35 to 55 (AFLLDWLVIWGLNHLLVSPLF) and 66 to 86 (MFTFSAYSVTTLIVYLAYFAL).

The protein resides in the cell membrane. This is an uncharacterized protein from Bacillus subtilis (strain 168).